Consider the following 197-residue polypeptide: Thymidylate kinase (197 aa).

Residue 7-14 (GIDGCGKS) coordinates ATP.

The protein belongs to the thymidylate kinase family.

It catalyses the reaction dTMP + ATP = dTDP + ADP. Its function is as follows. Phosphorylation of dTMP to form dTDP in both de novo and salvage pathways of dTTP synthesis. This Fervidobacterium nodosum (strain ATCC 35602 / DSM 5306 / Rt17-B1) protein is Thymidylate kinase.